A 295-amino-acid polypeptide reads, in one-letter code: Ethanolamine ammonia-lyase small subunit (295 aa).

Adenosylcob(III)alamin is bound by residues V207, E228, and C258.

It belongs to the EutC family. The basic unit is a heterodimer which dimerizes to form tetramers. The heterotetramers trimerize; 6 large subunits form a core ring with 6 small subunits projecting outwards. The cofactor is adenosylcob(III)alamin.

The protein resides in the bacterial microcompartment. The enzyme catalyses ethanolamine = acetaldehyde + NH4(+). It functions in the pathway amine and polyamine degradation; ethanolamine degradation. Functionally, catalyzes the deamination of various vicinal amino-alcohols to oxo compounds. Allows this organism to utilize ethanolamine as the sole source of nitrogen and carbon in the presence of external vitamin B12. This is Ethanolamine ammonia-lyase small subunit from Escherichia coli (strain SE11).